The following is a 572-amino-acid chain: MKKLSGIGVSDGMALAKAFLVKTPEFAVNKYLKHQLTKAQAKRLLDSAFKKAVKDLEEIKEITVNNINTEAGMIFDAHIQMLNDPTITEQLEQQLAQNVHPVIAVDTVFSQTATMFSQMQDKYFQERAADILDLRQRLLAYLTGQKPHDLVKIKSDVIIVAHDLTPSQTATLNKKYVKGFLTEIGGRTSHAAIMARSLEIPAVVGIKGITTKVKDGQIVGVDGRKGIAGLDLNSKDTTEWKKQKALEEKYQQELKQYTNKETVTLDGHAVVVAANIGNVKDMELACQYNTNGVGLFRTEFLYMNSQEWPDEETQYQAYKAVLEQAHGDLVIIRTLDIGGDKKLNYYEFPHEDNPFLGYRALRLTLDKQDIFKTQLRALLRAADHGQLGIMFPMVATLDELLQAKQLLNQVHQELGGNKQFKLGIMIEIPAAVLAANTLSHHVDFFSIGTNDLIQYSFAADRMNKNVSYLYQPLNPALLKLIYLTIEGGKVNDIWTGMCGEMAGEPLAIPLLLGLGLKEFSMSASSMFKARMIIAKLNYTECQTLAQKALTLANAKEVEKLVEKFFKKKDIFI.

Residue H190 is the Tele-phosphohistidine intermediate of the active site. The phosphoenolpyruvate site is built by R297 and R333. Mg(2+) contacts are provided by E427 and D451. Residues 450 to 451 (ND) and R461 contribute to the phosphoenolpyruvate site. Catalysis depends on C498, which acts as the Proton donor.

This sequence belongs to the PEP-utilizing enzyme family. As to quaternary structure, homodimer. Mg(2+) is required as a cofactor.

The protein localises to the cytoplasm. It catalyses the reaction L-histidyl-[protein] + phosphoenolpyruvate = N(pros)-phospho-L-histidyl-[protein] + pyruvate. Functionally, general (non sugar-specific) component of the phosphoenolpyruvate-dependent sugar phosphotransferase system (sugar PTS). This major carbohydrate active-transport system catalyzes the phosphorylation of incoming sugar substrates concomitantly with their translocation across the cell membrane. Enzyme I transfers the phosphoryl group from phosphoenolpyruvate (PEP) to the phosphoryl carrier protein (HPr). This is Phosphoenolpyruvate-protein phosphotransferase (ptsI) from Mycoplasma pneumoniae (strain ATCC 29342 / M129 / Subtype 1) (Mycoplasmoides pneumoniae).